A 561-amino-acid polypeptide reads, in one-letter code: Type II methyltransferase M.BstVI (561 aa).

The protein belongs to the N(4)/N(6)-methyltransferase family.

The enzyme catalyses a 2'-deoxyadenosine in DNA + S-adenosyl-L-methionine = an N(6)-methyl-2'-deoxyadenosine in DNA + S-adenosyl-L-homocysteine + H(+). In terms of biological role, a gamma subtype methylase, recognizes the double-stranded sequence 5'-CTCGAG-3', methylates A-5 on both strands, and protects the DNA from cleavage by the BstVI endonuclease. This chain is Type II methyltransferase M.BstVI, found in Geobacillus stearothermophilus (Bacillus stearothermophilus).